The primary structure comprises 593 residues: Chaperone protein DnaK (593 aa).

T181 bears the Phosphothreonine; by autocatalysis mark.

This sequence belongs to the heat shock protein 70 family.

In terms of biological role, acts as a chaperone. The sequence is that of Chaperone protein DnaK from Mycoplasmoides gallisepticum (strain R(low / passage 15 / clone 2)) (Mycoplasma gallisepticum).